Consider the following 63-residue polypeptide: Large ribosomal subunit protein uL30 (63 aa).

The protein belongs to the universal ribosomal protein uL30 family. In terms of assembly, part of the 50S ribosomal subunit.

In Geobacillus stearothermophilus (Bacillus stearothermophilus), this protein is Large ribosomal subunit protein uL30.